The following is a 357-amino-acid chain: Fructose-bisphosphate aldolase, cytoplasmic isozyme 1 (357 aa).

Substrate is bound by residues R52 and K142. The active-site Proton acceptor is E183. K225 acts as the Schiff-base intermediate with dihydroxyacetone-P in catalysis.

This sequence belongs to the class I fructose-bisphosphate aldolase family.

The protein resides in the cytoplasm. It carries out the reaction beta-D-fructose 1,6-bisphosphate = D-glyceraldehyde 3-phosphate + dihydroxyacetone phosphate. The protein operates within carbohydrate degradation; glycolysis; D-glyceraldehyde 3-phosphate and glycerone phosphate from D-glucose: step 4/4. In Pisum sativum (Garden pea), this protein is Fructose-bisphosphate aldolase, cytoplasmic isozyme 1.